We begin with the raw amino-acid sequence, 440 residues long: Heat stress transcription factor A-4b (440 aa).

Positions 121–181 (NERKDYEEEI…QRSLISYVRE (61 aa)) form a coiled coil. The segment at 133 to 183 (LKSDNAALSSELQNNTLKKLNMEKRMQALEEKLFVVEDQQRSLISYVREIV) is hydrophobic repeat HR-A/B. Positions 158 to 163 (MQALEE) match the Nuclear export signal motif. Residues 200 to 204 (RKKRR) carry the Nuclear localization signal motif. A disordered region spans residues 264 to 417 (DISYDDGVPG…EMKSGDRQHL (154 aa)). The span at 295 to 305 (SPPTRMRTSSA) shows a compositional bias: polar residues. Residues 333-343 (SRVDTRAKVSE) show a composition bias toward basic and acidic residues. The short motif at 375-384 (DGFWQQFLTE) is the AHA element. The span at 380–390 (QFLTEQPGSSD) shows a compositional bias: polar residues. The segment covering 391 to 417 (AHQEAQSERRDGGNKVDEMKSGDRQHL) has biased composition (basic and acidic residues).

This sequence belongs to the HSF family. Class A subfamily. In terms of assembly, homotrimer. Post-translationally, exhibits temperature-dependent phosphorylation.

It localises to the cytoplasm. It is found in the nucleus. Functionally, transcriptional regulator that specifically binds DNA of heat shock promoter elements (HSE). This chain is Heat stress transcription factor A-4b (HSFA4B), found in Oryza sativa subsp. japonica (Rice).